Here is a 291-residue protein sequence, read N- to C-terminus: Tyrosine recombinase XerD (291 aa).

In terms of domain architecture, Core-binding (CB) spans 1–82 (MEEGLIDRLL…ACKRLYIWME (82 aa)). Residues 103–285 (NIPTLITEQQ…ANVWLQGVVK (183 aa)) form the Tyr recombinase domain. Residues Arg143, Lys167, His237, Arg240, and His263 contribute to the active site. Tyr272 serves as the catalytic O-(3'-phospho-DNA)-tyrosine intermediate.

Belongs to the 'phage' integrase family. XerD subfamily. Forms a cyclic heterotetrameric complex composed of two molecules of XerC and two molecules of XerD.

The protein resides in the cytoplasm. In terms of biological role, site-specific tyrosine recombinase, which acts by catalyzing the cutting and rejoining of the recombining DNA molecules. The XerC-XerD complex is essential to convert dimers of the bacterial chromosome into monomers to permit their segregation at cell division. It also contributes to the segregational stability of plasmids. The sequence is that of Tyrosine recombinase XerD from Neisseria meningitidis serogroup A / serotype 4A (strain DSM 15465 / Z2491).